The sequence spans 391 residues: GTPase Obg (391 aa).

Residues 1-159 form the Obg domain; sequence MKFIDEALIR…RDLLLELMLL (159 aa). An OBG-type G domain is found at 160-333; the sequence is ADVGMLGLPN…LTRDIMDFIE (174 aa). GTP is bound by residues 166–173, 191–195, 213–216, 283–286, and 314–316; these read GLPNAGKS, FTTLV, DIPG, NKID, and SAA. Mg(2+) is bound by residues Ser173 and Thr193.

The protein belongs to the TRAFAC class OBG-HflX-like GTPase superfamily. OBG GTPase family. In terms of assembly, monomer. It depends on Mg(2+) as a cofactor.

Its subcellular location is the cytoplasm. Functionally, an essential GTPase which binds GTP, GDP and possibly (p)ppGpp with moderate affinity, with high nucleotide exchange rates and a fairly low GTP hydrolysis rate. Plays a role in control of the cell cycle, stress response, ribosome biogenesis and in those bacteria that undergo differentiation, in morphogenesis control. This is GTPase Obg from Actinobacillus pleuropneumoniae serotype 7 (strain AP76).